The following is a 586-amino-acid chain: MSENVDIKYIFVAGYLVVYDHQESAGREYELTREQSKSALPVLPGTIPINIDHESSCVVGTVLTILDLPRGLFCLGVVSTALAPIFLSYVQDDALFANAEEGMVLTETEKFLYLLSNILPSLSLSSRRLEKNEVPGKDFFAHVALCELGRREGTVAIYGATASEAIGAFDDLSAPIKEQLYEIATREKCAEVPRELSRPEITRVLMKKFIHGAFLMDRGTCLKTRREMAAVYNPKYLQANEVITIGIKEHSEETPENAIKDRSVSTQTAPSFDISESQQPSGQTHVPAMESATCSGQFLQTKNGASPSASREDMVYVPFEKYASLLAASARRDNDRRPVSPSREFSRRSRDSTHECSPGRDIWPRGFERHPRLESFMGPGMNHTYRPALYEDPNFCGRFPYIPYQSPASTYPVHPNYYSSNFGQFPGAGTYPIQYPSLHEQTVVSRLDALISALEKNNKRDSEYSENNPRKRSARTISENDPYFPGEMVPAKKITTEQQLCEKKEPVGSGINDILQGILTLQKEVAGLKSASNADSSSERKEELENSNQESARETVDASMPKRLKDAQTKLKRKKEAAAFAQMMAD.

Catalysis depends on charge relay system residues His53, Ser123, and His142. Positions 251 to 263 (SEETPENAIKDRS) are enriched in basic and acidic residues. 4 disordered regions span residues 251–288 (SEETPENAIKDRSVSTQTAPSFDISESQQPSGQTHVPA), 330–364 (ARRDNDRRPVSPSREFSRRSRDSTHECSPGRDIWP), 458–486 (NKRDSEYSENNPRKRSARTISENDPYFPG), and 530–586 (SASN…MMAD). Residues 264–284 (VSTQTAPSFDISESQQPSGQT) are compositionally biased toward polar residues. The interval 312–331 (EDMVYVPFEKYASLLAASAR) is interaction with pAP. Interaction with major capsid protein stretches follow at residues 566 to 586 (DAQTKLKRKKEAAAFAQMMAD) and 567 to 586 (AQTKLKRKKEAAAFAQMMAD).

It belongs to the herpesviridae capsid scaffolding protein family. Homomultimer. Interacts with major capsid protein. As to quaternary structure, exists in a monomer-dimer equilibrium with the dimer being the active species. Post-translationally, capsid scaffolding protein is cleaved by assemblin after formation of the spherical procapsid. As a result, the capsid obtains its mature, icosahedral shape. Cleavages occur at two or more sites: release (R-site) and maturation (M-site).

It is found in the host cytoplasm. It localises to the host nucleus. It carries out the reaction Cleaves -Ala-|-Ser- and -Ala-|-Ala- bonds in the scaffold protein.. Its function is as follows. Acts as a scaffold protein by binding major capsid protein in the cytoplasm, inducing the nuclear localization of both proteins. Multimerizes in the nucleus such as major capsid protein forms the icosahedral T=16 capsid. Autocatalytic cleavage releases the assembly protein, and subsequently abolishes interaction with major capsid protein. Cleavages products are evicted from the capsid before or during DNA packaging. Functionally, protease that plays an essential role in virion assembly within the nucleus. Catalyzes the cleavage of the assembly protein after formation of the spherical procapsid. By that cleavage, the capsid matures and gains its icosahedral shape. The cleavage sites seem to include -Ala-Ser-, -Ala-Ala-, as well as Ala-Thr bonds. Assemblin and cleavages products are evicted from the capsid before or during DNA packaging. Plays a major role in capsid assembly. Acts as a scaffold protein by binding major capsid protein. Multimerizes in the nucleus such as major capsid protein forms the icosahedral T=16 capsid. Cleaved by assemblin after capsid completion. The cleavages products are evicted from the capsid before or during DNA packaging. The sequence is that of Capsid scaffolding protein from Gallus gallus (Chicken).